The chain runs to 259 residues: Dickkopf-related protein 2 (259 aa).

The first 33 residues, 1-33 (MAALMRSKDSSCCLLLLAAVLMVESSQIGSSRA), serve as a signal peptide directing secretion. The N-linked (GlcNAc...) asparagine glycan is linked to N52. The segment at 78-127 (CSSDKECEVGRYCHSPHQGSSACMVCRRKKKRCHRDGMCCPSTRCNNGIC) is DKK-type Cys-1. 5 cysteine pairs are disulfide-bonded: C183–C195, C189–C204, C194–C231, C214–C239, and C233–C256. Residues 183-256 (CLRSSDCIEG…YSSKARLHVC (74 aa)) form a DKK-type Cys-2 region.

It belongs to the dickkopf family. In terms of assembly, interacts with LRP5 and LRP6. May be proteolytically processed by a furin-like protease. As to expression, expressed in heart, brain, skeletal muscle and lung.

Its subcellular location is the secreted. Antagonizes canonical Wnt signaling by inhibiting LRP5/6 interaction with Wnt and by forming a ternary complex with the transmembrane protein KREMEN that promotes internalization of LRP5/6. DKKs play an important role in vertebrate development, where they locally inhibit Wnt regulated processes such as antero-posterior axial patterning, limb development, somitogenesis and eye formation. In the adult, Dkks are implicated in bone formation and bone disease, cancer and Alzheimer disease. In Homo sapiens (Human), this protein is Dickkopf-related protein 2 (DKK2).